We begin with the raw amino-acid sequence, 178 residues long: Interleukin-10 (178 aa).

The signal sequence occupies residues 1–18 (MHSSALLCCLVLLTGVRA). Intrachain disulfides connect C30/C126 and C80/C132. N-linked (GlcNAc...) asparagine glycosylation occurs at N134.

It belongs to the IL-10 family. Homodimer. Interacts with IL10RA and IL10RB.

The protein localises to the secreted. Functionally, major immune regulatory cytokine that acts on many cells of the immune system where it has profound anti-inflammatory functions, limiting excessive tissue disruption caused by inflammation. Mechanistically, IL10 binds to its heterotetrameric receptor comprising IL10RA and IL10RB leading to JAK1 and STAT2-mediated phosphorylation of STAT3. In turn, STAT3 translocates to the nucleus where it drives expression of anti-inflammatory mediators. Targets antigen-presenting cells (APCs) such as macrophages and monocytes and inhibits their release of pro-inflammatory cytokines including granulocyte-macrophage colony-stimulating factor /GM-CSF, granulocyte colony-stimulating factor/G-CSF, IL-1 alpha, IL-1 beta, IL-6, IL-8 and TNF-alpha. Also interferes with antigen presentation by reducing the expression of MHC-class II and co-stimulatory molecules, thereby inhibiting their ability to induce T cell activation. In addition, controls the inflammatory response of macrophages by reprogramming essential metabolic pathways including mTOR signaling. This chain is Interleukin-10 (IL10), found in Macaca fascicularis (Crab-eating macaque).